The primary structure comprises 376 residues: MRSPHRDAIRTARGLVVKVGTTALTTPSGMFDAGRLAGLAEAVERRMKAGSDVVIVSSGAIAAGIEPLGLSRRPKDLATKQAAASVGQVALVNSWSAAFARYGRTVGQVLLTAHDISMRVQHTNAQRTLDRLRALHAVAIVNENDTVATNEIRFGDNDRLSALVAHLVGADALVLLSDIDGLYDCDPRKTADATFIPEVSGPADLDGVVAGRSSHLGTGGMASKVAAALLAADAGVPVLLAPAADAATALADASVGTVFAARPARLSARRFWVRYAAEATGALTLDAGAVRAVVRQRRSLLAAGITAVSGRFCGGDVVELRAPDAAMVARGVVAYDASELATMVGRSTSELPGELRRPVVHADDLVAVSAKQAKQV.

K18 is an ATP binding site. Substrate contacts are provided by S58, D145, and N157. ATP-binding positions include 177-178 and 218-224; these read SD and TGGMASK. The PUA domain occupies 280-358; that stretch reads TGALTLDAGA…SELPGELRRP (79 aa).

It belongs to the glutamate 5-kinase family.

The protein localises to the cytoplasm. It catalyses the reaction L-glutamate + ATP = L-glutamyl 5-phosphate + ADP. The protein operates within amino-acid biosynthesis; L-proline biosynthesis; L-glutamate 5-semialdehyde from L-glutamate: step 1/2. Catalyzes the transfer of a phosphate group to glutamate to form L-glutamate 5-phosphate. The chain is Glutamate 5-kinase from Mycobacterium tuberculosis (strain ATCC 25177 / H37Ra).